A 404-amino-acid chain; its full sequence is Cysteine desulfurase IscS (404 aa).

Pyridoxal 5'-phosphate contacts are provided by residues Ala75–Thr76, Asn155, Gln183, and Ser203–His205. Position 206 is an N6-(pyridoxal phosphate)lysine (Lys206). Thr243 contacts pyridoxal 5'-phosphate. Cys328 (cysteine persulfide intermediate) is an active-site residue. Cys328 is a binding site for [2Fe-2S] cluster.

The protein belongs to the class-V pyridoxal-phosphate-dependent aminotransferase family. NifS/IscS subfamily. Homodimer. Forms a heterotetramer with IscU, interacts with other sulfur acceptors. Pyridoxal 5'-phosphate is required as a cofactor.

It is found in the cytoplasm. The enzyme catalyses (sulfur carrier)-H + L-cysteine = (sulfur carrier)-SH + L-alanine. It participates in cofactor biosynthesis; iron-sulfur cluster biosynthesis. Master enzyme that delivers sulfur to a number of partners involved in Fe-S cluster assembly, tRNA modification or cofactor biosynthesis. Catalyzes the removal of elemental sulfur atoms from cysteine to produce alanine. Functions as a sulfur delivery protein for Fe-S cluster synthesis onto IscU, an Fe-S scaffold assembly protein, as well as other S acceptor proteins. The sequence is that of Cysteine desulfurase IscS from Aeromonas salmonicida (strain A449).